Consider the following 289-residue polypeptide: UDP-3-O-acyl-N-acetylglucosamine deacetylase (289 aa).

3 residues coordinate Zn(2+): H79, H236, and D240. Residue H263 is the Proton donor of the active site.

Belongs to the LpxC family. Zn(2+) is required as a cofactor.

The enzyme catalyses a UDP-3-O-[(3R)-3-hydroxyacyl]-N-acetyl-alpha-D-glucosamine + H2O = a UDP-3-O-[(3R)-3-hydroxyacyl]-alpha-D-glucosamine + acetate. It functions in the pathway glycolipid biosynthesis; lipid IV(A) biosynthesis; lipid IV(A) from (3R)-3-hydroxytetradecanoyl-[acyl-carrier-protein] and UDP-N-acetyl-alpha-D-glucosamine: step 2/6. Functionally, catalyzes the hydrolysis of UDP-3-O-myristoyl-N-acetylglucosamine to form UDP-3-O-myristoylglucosamine and acetate, the committed step in lipid A biosynthesis. This Rickettsia typhi (strain ATCC VR-144 / Wilmington) protein is UDP-3-O-acyl-N-acetylglucosamine deacetylase.